Reading from the N-terminus, the 618-residue chain is Protein polyglycylase TTLL10 (618 aa).

Residues 1–76 are disordered; the sequence is MGSSQEEGLP…GLLLGDGKPS (76 aa). The span at 57-74 shows a compositional bias: low complexity; the sequence is ATGPPAALLEGLLLGDGK. One can recognise a TTL domain in the interval 82-479; sequence PGPFFYIGGN…TFQKSLRGQK (398 aa). ATP is bound by residues Lys-240, 246–247, 289–292, 302–304, and 345–346; these read QG, QRYI, KFD, and TN. Residue Gln-246 coordinates a protein. 3 residues coordinate Mg(2+): Asp-425, Glu-438, and Asn-440. Positions 503 to 618 are disordered; it reads LGGSCSLRRR…PATLPAFRDL (116 aa). A compositionally biased stretch (pro residues) spans 539–557; the sequence is PVPPPLAPQRPQLPGPSPD. Positions 585-594 are enriched in basic and acidic residues; that stretch reads AKEEREEPEN.

Mg(2+) is required as a cofactor.

The protein localises to the cytoplasm. It is found in the cytoskeleton. Its subcellular location is the cell projection. The protein resides in the cilium. It localises to the cilium axoneme. It carries out the reaction (glycyl)(n)-glycyl-L-glutamyl-[protein] + glycine + ATP = (glycyl)(n+1)-glycyl-L-glutamyl-[protein] + ADP + phosphate + H(+). Its function is as follows. Polyglycylase which modifies both tubulin and non-tubulin proteins, generating polyglycine side chains of variable lengths on the gamma-carboxyl groups of specific glutamate residues of target proteins. Involved in the elongation step rather than the initiation step of the polyglycylation reaction. Polyglycylates alpha-tubulin and beta-tubulin. Polyglycylates non-tubulin proteins such as nucleosome assembly protein NAP1. This Macaca fascicularis (Crab-eating macaque) protein is Protein polyglycylase TTLL10 (TTLL10).